A 332-amino-acid chain; its full sequence is Adenosine receptor A2b (332 aa).

Over 1–8 (MQLETQDA) the chain is Extracellular. The chain crosses the membrane as a helical span at residues 9–33 (LYVALELVIAALAVAGNVLVCAAVG). The Cytoplasmic segment spans residues 34–43 (ASSALQTPTN). Residues 44–67 (YFLVSLATADVAVGLFAIPFAITI) form a helical membrane-spanning segment. Over 68 to 78 (SLGFCTDFHSC) the chain is Extracellular. A disulfide bridge links Cys-78 with Cys-171. The helical transmembrane segment at 79 to 101 (LFLACFVLVLTQSSIFSLLAVAV) threads the bilayer. At 102–121 (DRYLAIRVPLRYKGLVTGTR) the chain is on the cytoplasmic side. A helical transmembrane segment spans residues 122 to 144 (ARGIIAVLWVLAFGIGLTPFLGW). Residues 145–178 (NSKDRATSNCTEPGDGITNKSCCPVKCLFENVVP) lie on the Extracellular side of the membrane. 2 N-linked (GlcNAc...) asparagine glycosylation sites follow: Asn-153 and Asn-163. Glu-174 serves as a coordination point for adenosine. The helical transmembrane segment at 179-203 (MSYMVYFNFFGCVLPPLLIMMVIYI) threads the bilayer. Residues 204–235 (KIFMVACKQLQHMELMEHSRTTLQREIHAAKS) lie on the Cytoplasmic side of the membrane. Residues 236-259 (LAMIVGIFALCWLPVHAINCITLF) form a helical membrane-spanning segment. An adenosine-binding site is contributed by Asn-254. Topologically, residues 260–267 (HPALAKDK) are extracellular. Residues 268-291 (PKWVMNVAILLSHANSVVNPIVYA) form a helical membrane-spanning segment. 2 residues coordinate adenosine: Ser-279 and His-280. The Cytoplasmic portion of the chain corresponds to 292–332 (YRNRDFRYSFHRIISRYVLCQTDTKGGSGQAGGQSTFSLSL). A lipid anchor (S-palmitoyl cysteine) is attached at Cys-311.

The protein belongs to the G-protein coupled receptor 1 family.

It is found in the cell membrane. In terms of biological role, receptor for adenosine. The activity of this receptor is mediated by G proteins which activate adenylyl cyclase. This chain is Adenosine receptor A2b (Adora2b), found in Rattus norvegicus (Rat).